The chain runs to 119 residues: Ribonuclease P protein component (119 aa).

This sequence belongs to the RnpA family. Consists of a catalytic RNA component (M1 or rnpB) and a protein subunit.

It carries out the reaction Endonucleolytic cleavage of RNA, removing 5'-extranucleotides from tRNA precursor.. RNaseP catalyzes the removal of the 5'-leader sequence from pre-tRNA to produce the mature 5'-terminus. It can also cleave other RNA substrates such as 4.5S RNA. The protein component plays an auxiliary but essential role in vivo by binding to the 5'-leader sequence and broadening the substrate specificity of the ribozyme. The polypeptide is Ribonuclease P protein component (Borreliella burgdorferi (strain ATCC 35210 / DSM 4680 / CIP 102532 / B31) (Borrelia burgdorferi)).